A 434-amino-acid chain; its full sequence is Aspartate--tRNA(Asp/Asn) ligase (434 aa).

Glu167 contacts L-aspartate. The aspartate stretch occupies residues 189 to 192; that stretch reads QLFK. Arg211 serves as a coordination point for L-aspartate. Residues 211–213, 219–221, and Glu357 each bind ATP; these read RAE and RHL. Residues Glu357 and Ser360 each coordinate Mg(2+). Ser360 and Arg364 together coordinate L-aspartate. Residue 405–408 participates in ATP binding; that stretch reads GGER.

The protein belongs to the class-II aminoacyl-tRNA synthetase family. Type 2 subfamily. As to quaternary structure, homodimer. The cofactor is Mg(2+).

It localises to the cytoplasm. It catalyses the reaction tRNA(Asx) + L-aspartate + ATP = L-aspartyl-tRNA(Asx) + AMP + diphosphate. Its function is as follows. Aspartyl-tRNA synthetase with relaxed tRNA specificity since it is able to aspartylate not only its cognate tRNA(Asp) but also tRNA(Asn). Reaction proceeds in two steps: L-aspartate is first activated by ATP to form Asp-AMP and then transferred to the acceptor end of tRNA(Asp/Asn). This is Aspartate--tRNA(Asp/Asn) ligase from Haloquadratum walsbyi (strain DSM 16790 / HBSQ001).